Consider the following 194-residue polypeptide: SRP-independent targeting protein 3 homolog (194 aa).

2 helical membrane passes run 43–63 (ILYA…KIII) and 110–130 (LVTI…PPLL).

The protein belongs to the PHO88 family.

It localises to the endoplasmic reticulum membrane. May function in a SRP (signal recognition particle) and GET (guided entry of tail-anchored proteins) independent pathway for targeting a broad range of substrate proteins to the endoplasmic reticulum. Involved in inorganic phosphate uptake. Also involved in telomere length regulation and maintenance. This Schizosaccharomyces pombe (strain 972 / ATCC 24843) (Fission yeast) protein is SRP-independent targeting protein 3 homolog.